The primary structure comprises 466 residues: Ribulose bisphosphate carboxylase large chain (466 aa).

Lys5 carries the post-translational modification N6,N6,N6-trimethyllysine. Asn114 and Thr164 together coordinate substrate. The active-site Proton acceptor is Lys166. Lys168 is a binding site for substrate. 3 residues coordinate Mg(2+): Lys192, Asp194, and Glu195. An N6-carboxylysine modification is found at Lys192. His285 (proton acceptor) is an active-site residue. Residues Arg286, His318, and Ser370 each contribute to the substrate site.

The protein belongs to the RuBisCO large chain family. Type I subfamily. Heterohexadecamer of 8 large chains and 8 small chains; disulfide-linked. The disulfide link is formed within the large subunit homodimers. Requires Mg(2+) as cofactor. The disulfide bond which can form in the large chain dimeric partners within the hexadecamer appears to be associated with oxidative stress and protein turnover.

It localises to the plastid. The protein localises to the chloroplast. It carries out the reaction 2 (2R)-3-phosphoglycerate + 2 H(+) = D-ribulose 1,5-bisphosphate + CO2 + H2O. The catalysed reaction is D-ribulose 1,5-bisphosphate + O2 = 2-phosphoglycolate + (2R)-3-phosphoglycerate + 2 H(+). Functionally, ruBisCO catalyzes two reactions: the carboxylation of D-ribulose 1,5-bisphosphate, the primary event in carbon dioxide fixation, as well as the oxidative fragmentation of the pentose substrate in the photorespiration process. Both reactions occur simultaneously and in competition at the same active site. This chain is Ribulose bisphosphate carboxylase large chain, found in Gonopterodendron arboreum (Maracaibo lignum-vitae).